The chain runs to 304 residues: UDP-3-O-acyl-N-acetylglucosamine deacetylase (304 aa).

3 residues coordinate Zn(2+): H78, H237, and D241. The active-site Proton donor is H264.

It belongs to the LpxC family. Zn(2+) serves as cofactor.

The catalysed reaction is a UDP-3-O-[(3R)-3-hydroxyacyl]-N-acetyl-alpha-D-glucosamine + H2O = a UDP-3-O-[(3R)-3-hydroxyacyl]-alpha-D-glucosamine + acetate. It functions in the pathway glycolipid biosynthesis; lipid IV(A) biosynthesis; lipid IV(A) from (3R)-3-hydroxytetradecanoyl-[acyl-carrier-protein] and UDP-N-acetyl-alpha-D-glucosamine: step 2/6. Catalyzes the hydrolysis of UDP-3-O-myristoyl-N-acetylglucosamine to form UDP-3-O-myristoylglucosamine and acetate, the committed step in lipid A biosynthesis. In Xylella fastidiosa (strain 9a5c), this protein is UDP-3-O-acyl-N-acetylglucosamine deacetylase.